The following is a 174-amino-acid chain: Crossover junction endodeoxyribonuclease RuvC (174 aa).

Active-site residues include D8, E69, and D141. 3 residues coordinate Mg(2+): D8, E69, and D141.

Belongs to the RuvC family. In terms of assembly, homodimer which binds Holliday junction (HJ) DNA. The HJ becomes 2-fold symmetrical on binding to RuvC with unstacked arms; it has a different conformation from HJ DNA in complex with RuvA. In the full resolvosome a probable DNA-RuvA(4)-RuvB(12)-RuvC(2) complex forms which resolves the HJ. It depends on Mg(2+) as a cofactor.

The protein localises to the cytoplasm. It carries out the reaction Endonucleolytic cleavage at a junction such as a reciprocal single-stranded crossover between two homologous DNA duplexes (Holliday junction).. The RuvA-RuvB-RuvC complex processes Holliday junction (HJ) DNA during genetic recombination and DNA repair. Endonuclease that resolves HJ intermediates. Cleaves cruciform DNA by making single-stranded nicks across the HJ at symmetrical positions within the homologous arms, yielding a 5'-phosphate and a 3'-hydroxyl group; requires a central core of homology in the junction. The consensus cleavage sequence is 5'-(A/T)TT(C/G)-3'. Cleavage occurs on the 3'-side of the TT dinucleotide at the point of strand exchange. HJ branch migration catalyzed by RuvA-RuvB allows RuvC to scan DNA until it finds its consensus sequence, where it cleaves and resolves the cruciform DNA. The sequence is that of Crossover junction endodeoxyribonuclease RuvC from Xanthomonas axonopodis pv. citri (strain 306).